A 400-amino-acid chain; its full sequence is Elongation factor Tu (400 aa).

Residues 10–208 enclose the tr-type G domain; it reads KPHLNVGTIG…TMDEYFPEPQ (199 aa). Residues 19–26 form a G1 region; that stretch reads GHIDHGKT. Position 19–26 (19–26) interacts with GTP; that stretch reads GHIDHGKT. Thr-26 is a Mg(2+) binding site. The interval 60-64 is G2; sequence GITIN. The G3 stretch occupies residues 81 to 84; sequence DCPG. GTP is bound by residues 81–85 and 136–139; these read DCPGH and NKTD. A G4 region spans residues 136–139; it reads NKTD. Residues 174–176 are G5; sequence SAL.

Belongs to the TRAFAC class translation factor GTPase superfamily. Classic translation factor GTPase family. EF-Tu/EF-1A subfamily. Monomer.

The protein localises to the cytoplasm. It catalyses the reaction GTP + H2O = GDP + phosphate + H(+). Its function is as follows. GTP hydrolase that promotes the GTP-dependent binding of aminoacyl-tRNA to the A-site of ribosomes during protein biosynthesis. The polypeptide is Elongation factor Tu (Thermosipho melanesiensis (strain DSM 12029 / CIP 104789 / BI429)).